A 190-amino-acid polypeptide reads, in one-letter code: Dual specificity protein phosphatase 21 (190 aa).

Positions 21-162 (SFSQITRSLF…LINYEFKLFN (142 aa)) constitute a Tyrosine-protein phosphatase domain. Residues 43–128 (LSSNRITAIV…AYLMKYHSMS (86 aa)) form a sufficient for mitochondrial localization region. C106 functions as the Phosphocysteine intermediate in the catalytic mechanism.

Belongs to the protein-tyrosine phosphatase family. Non-receptor class dual specificity subfamily. Microtubule inner protein component of sperm flagellar doublet microtubules. Expressed in testis.

Its subcellular location is the cytoplasm. It is found in the nucleus. It localises to the mitochondrion inner membrane. The protein resides in the cytoskeleton. The protein localises to the flagellum axoneme. The catalysed reaction is O-phospho-L-tyrosyl-[protein] + H2O = L-tyrosyl-[protein] + phosphate. The enzyme catalyses O-phospho-L-seryl-[protein] + H2O = L-seryl-[protein] + phosphate. It carries out the reaction O-phospho-L-threonyl-[protein] + H2O = L-threonyl-[protein] + phosphate. Its function is as follows. Protein phosphatase component of the sperm flagellar doublet microtubules. May act as a regulator of sperm motility by mediating dephosphorylation of sperm doublet microtubule proteins. Can dephosphorylate single and diphosphorylated synthetic MAPK peptides, with preference for the phosphotyrosine and diphosphorylated forms over phosphothreonine. This Homo sapiens (Human) protein is Dual specificity protein phosphatase 21 (DUSP21).